Consider the following 173-residue polypeptide: Putative pre-16S rRNA nuclease (173 aa).

Belongs to the YqgF nuclease family.

The protein resides in the cytoplasm. Functionally, could be a nuclease involved in processing of the 5'-end of pre-16S rRNA. This chain is Putative pre-16S rRNA nuclease, found in Rhodopirellula baltica (strain DSM 10527 / NCIMB 13988 / SH1).